Reading from the N-terminus, the 336-residue chain is Glycerol-3-phosphate dehydrogenase [NAD(P)+] (336 aa).

The NADPH site is built by W11, R33, and K105. Sn-glycerol 3-phosphate contacts are provided by K105, G141, and S143. A145 is a binding site for NADPH. Sn-glycerol 3-phosphate-binding residues include K196, D249, S259, R260, and N261. The active-site Proton acceptor is K196. NADPH is bound at residue R260. The NADPH site is built by V284 and E286.

This sequence belongs to the NAD-dependent glycerol-3-phosphate dehydrogenase family.

It is found in the cytoplasm. The enzyme catalyses sn-glycerol 3-phosphate + NAD(+) = dihydroxyacetone phosphate + NADH + H(+). It catalyses the reaction sn-glycerol 3-phosphate + NADP(+) = dihydroxyacetone phosphate + NADPH + H(+). It participates in membrane lipid metabolism; glycerophospholipid metabolism. In terms of biological role, catalyzes the reduction of the glycolytic intermediate dihydroxyacetone phosphate (DHAP) to sn-glycerol 3-phosphate (G3P), the key precursor for phospholipid synthesis. The sequence is that of Glycerol-3-phosphate dehydrogenase [NAD(P)+] from Delftia acidovorans (strain DSM 14801 / SPH-1).